The primary structure comprises 103 residues: Protein S100-A16 (103 aa).

The 36-residue stretch at 12–47 (VIVLVENFYKYVSKYSLVKNKISKSSFREMLQKELN) folds into the EF-hand 1; degenerate domain. The EF-hand 2 domain maps to 54–89 (GNRKAADKLIQNLDANHDGRISFDEYWTLIGGITGP). Residues Asp67, Asn69, Asp71, Arg73, and Glu78 each coordinate Ca(2+).

Belongs to the S-100 family. As to quaternary structure, homodimer. Interacts with TP53. As to expression, ubiquitous. Highly expressed in esophagus, adipose tissues and colon. Expressed at lower level in lung, brain, pancreas and skeletal muscle. Expression is up-regulated in tumors of bladder, lung, thyroid gland, pancreas and ovary. Expressed in astrocytes.

It localises to the nucleus. The protein localises to the nucleolus. Its subcellular location is the cytoplasm. Its function is as follows. Calcium-binding protein. Binds one calcium ion per monomer. Can promote differentiation of adipocytes (in vitro). Overexpression in preadipocytes increases their proliferation, enhances adipogenesis and reduces insulin-stimulated glucose uptake. The sequence is that of Protein S100-A16 from Homo sapiens (Human).